The sequence spans 251 residues: uncharacterized protein (251 aa).

A signal peptide spans 1 to 18 (MKILIILSIILCSLFGRA).

The protein belongs to the MlaA family.

This is an uncharacterized protein from Rickettsia prowazekii (strain Madrid E).